A 335-amino-acid polypeptide reads, in one-letter code: Tryptophan--tRNA ligase (335 aa).

ATP-binding positions include 19–21 and 28–29; these read QPS and GN. The 'HIGH' region signature appears at 20–29; it reads PSSGMLHLGN. D143 serves as a coordination point for L-tryptophan. ATP-binding positions include 155–157, I192, and 201–205; these read GAD and KMSKS. Positions 201–205 match the 'KMSKS' region motif; the sequence is KMSKS.

The protein belongs to the class-I aminoacyl-tRNA synthetase family. In terms of assembly, homodimer.

The protein localises to the cytoplasm. It catalyses the reaction tRNA(Trp) + L-tryptophan + ATP = L-tryptophyl-tRNA(Trp) + AMP + diphosphate + H(+). Catalyzes the attachment of tryptophan to tRNA(Trp). The protein is Tryptophan--tRNA ligase of Tropheryma whipplei (strain TW08/27) (Whipple's bacillus).